The primary structure comprises 366 residues: 4-hydroxy-3-methylbut-2-en-1-yl diphosphate synthase (flavodoxin) (366 aa).

[4Fe-4S] cluster-binding residues include Cys270, Cys273, Cys305, and Glu312.

This sequence belongs to the IspG family. Requires [4Fe-4S] cluster as cofactor.

It catalyses the reaction (2E)-4-hydroxy-3-methylbut-2-enyl diphosphate + oxidized [flavodoxin] + H2O + 2 H(+) = 2-C-methyl-D-erythritol 2,4-cyclic diphosphate + reduced [flavodoxin]. It participates in isoprenoid biosynthesis; isopentenyl diphosphate biosynthesis via DXP pathway; isopentenyl diphosphate from 1-deoxy-D-xylulose 5-phosphate: step 5/6. Its function is as follows. Converts 2C-methyl-D-erythritol 2,4-cyclodiphosphate (ME-2,4cPP) into 1-hydroxy-2-methyl-2-(E)-butenyl 4-diphosphate. The protein is 4-hydroxy-3-methylbut-2-en-1-yl diphosphate synthase (flavodoxin) of Acidithiobacillus ferrooxidans (strain ATCC 53993 / BNL-5-31) (Leptospirillum ferrooxidans (ATCC 53993)).